The primary structure comprises 199 residues: ATP-dependent Clp protease proteolytic subunit (199 aa).

Residue S102 is the Nucleophile of the active site. The active site involves H127.

Belongs to the peptidase S14 family. In terms of assembly, component of the chloroplastic Clp protease core complex.

It is found in the plastid. The protein localises to the chloroplast stroma. The catalysed reaction is Hydrolysis of proteins to small peptides in the presence of ATP and magnesium. alpha-casein is the usual test substrate. In the absence of ATP, only oligopeptides shorter than five residues are hydrolyzed (such as succinyl-Leu-Tyr-|-NHMec, and Leu-Tyr-Leu-|-Tyr-Trp, in which cleavage of the -Tyr-|-Leu- and -Tyr-|-Trp bonds also occurs).. In terms of biological role, cleaves peptides in various proteins in a process that requires ATP hydrolysis. Has a chymotrypsin-like activity. Plays a major role in the degradation of misfolded proteins. This chain is ATP-dependent Clp protease proteolytic subunit, found in Physcomitrium patens (Spreading-leaved earth moss).